The following is a 185-amino-acid chain: Protein LURP-one-related 13 (185 aa).

It belongs to the LOR family.

In terms of biological role, might be related to the phospholipid scramblase and tubby-like superfamily of membrane tethered transcription factors. In Arabidopsis thaliana (Mouse-ear cress), this protein is Protein LURP-one-related 13.